The following is a 513-amino-acid chain: Cyclin-dependent kinase C-2 (513 aa).

In terms of domain architecture, Protein kinase spans 26–325; sequence FEKLEQIGEG…AKDALDAEYF (300 aa). Residues 32 to 40 and K55 contribute to the ATP site; that span reads IGEGTYGQV. Y37 is subject to Phosphotyrosine. D164 acts as the Proton acceptor in catalysis. Phosphothreonine is present on T198. The disordered stretch occupies residues 337-513; that stretch reads LPTYESSHEF…ARNQQYGWQP (177 aa). Positions 395-404 are enriched in low complexity; it reads AGPNHPMNNN. A compositionally biased stretch (polar residues) spans 434–448; the sequence is SGNQTGGYNNQSRGG. 2 stretches are compositionally biased toward gly residues: residues 461 to 476 and 483 to 496; these read APYG…GYGV and QGGG…GSGR.

This sequence belongs to the protein kinase superfamily. CMGC Ser/Thr protein kinase family. CDC2/CDKX subfamily. As to quaternary structure, interacts with CYCT1-3. As to expression, highly expressed in flowers. Expressed in seedlings, roots, rosettes and stems.

It carries out the reaction L-seryl-[protein] + ATP = O-phospho-L-seryl-[protein] + ADP + H(+). The catalysed reaction is L-threonyl-[protein] + ATP = O-phospho-L-threonyl-[protein] + ADP + H(+). The enzyme catalyses [DNA-directed RNA polymerase] + ATP = phospho-[DNA-directed RNA polymerase] + ADP + H(+). This is Cyclin-dependent kinase C-2 (CDKC-2) from Arabidopsis thaliana (Mouse-ear cress).